Reading from the N-terminus, the 838-residue chain is MKYDFKNVERFCQDKWDFSVSKSSKQEKCYVLEMFPYPSGKIHMGHLRNYAIGDVIARYKRARGFEVLHPIGWDAFGLPAENAARDNNISPEIWTKENIDNMRAQLKSIGLSYNWNRELSTCEPNYYTHEQKFFLDFLKHGLAYRKESWVNWDPVDQTVLANEQVVDGKGWRSGAVVEKRKLSQWFLKITDFAEDLLKCLQSLKNWPEKVKTMQERWIGKSEGATIEFEVVGLNKKLKVFTTYPHTLFGASFCAVAAEHPIVQDLKNGSSVVIPVLDTGIQEIKSKRENDEKIGVYTGLNVKHPFLDKELPLYIANFVLMEYGEGAIFGCPAHDQRDFEFAQKYNLPIIPVISSAHLGVIPARDQNSYNGSQCQATQMTKEAYTGDGVMFNSEFLNGLMVSEAKEVIIKKLKEKGIGKKTTNYRLHDWGVSRQRYWGCPIPIIYCKDCGTVPVPEKDLPVILPADVEFTSGGNPLDKHPTWKFVDCPKCGKQAERETDTFDTFFESSWYFAAFCSEDKSIDKDACNRFMPVDYYIGGIEHAILHLLYSRFFCRALTKCGYFDIKEPFSTLITQGMVCHATYKDENGKWLFLAEAKELIARGTKVQVGKVEKMSKSKKNTVDPNFIIEKYGADTARLFVLSDTPPEKDMEWSDDGVEGCSRYVNKLWRMVMQLKPVNMHYDNKSVTGGLLEYRKKIHKLLHGLTDDLENCRLNCVVAKFREMTNLIAEIDVAAGKSLIDEGICILIRVIEPFMPHLAESLWQEIGGQPWPKADESLLVDDTVTIAVQINGKLRATIEVAINLPQEELKKIAIDSVSSKIDQNKVRTVYAVPNKIVNIVI.

The 'HIGH' region signature appears at Pro36–His46. The short motif at Lys611–Ser615 is the 'KMSKS' region element. Lys614 is a binding site for ATP.

It belongs to the class-I aminoacyl-tRNA synthetase family.

The protein localises to the cytoplasm. The catalysed reaction is tRNA(Leu) + L-leucine + ATP = L-leucyl-tRNA(Leu) + AMP + diphosphate. This is Leucine--tRNA ligase from Wolbachia sp. subsp. Drosophila simulans (strain wRi).